The primary structure comprises 562 residues: DNA ligase (562 aa).

Glu-252 serves as a coordination point for ATP. The active-site N6-AMP-lysine intermediate is Lys-254. Residues Arg-259, Arg-274, Glu-303, Phe-343, Arg-419, and Lys-425 each contribute to the ATP site.

It belongs to the ATP-dependent DNA ligase family. Mg(2+) is required as a cofactor.

The catalysed reaction is ATP + (deoxyribonucleotide)n-3'-hydroxyl + 5'-phospho-(deoxyribonucleotide)m = (deoxyribonucleotide)n+m + AMP + diphosphate.. Its function is as follows. DNA ligase that seals nicks in double-stranded DNA during DNA replication, DNA recombination and DNA repair. In Methanococcus aeolicus (strain ATCC BAA-1280 / DSM 17508 / OCM 812 / Nankai-3), this protein is DNA ligase.